A 251-amino-acid polypeptide reads, in one-letter code: Segregation and condensation protein A (251 aa).

This sequence belongs to the ScpA family. As to quaternary structure, component of a cohesin-like complex composed of ScpA, ScpB and the Smc homodimer, in which ScpA and ScpB bind to the head domain of Smc. The presence of the three proteins is required for the association of the complex with DNA.

It localises to the cytoplasm. Its function is as follows. Participates in chromosomal partition during cell division. May act via the formation of a condensin-like complex containing Smc and ScpB that pull DNA away from mid-cell into both cell halves. The chain is Segregation and condensation protein A from Bacillus licheniformis (strain ATCC 14580 / DSM 13 / JCM 2505 / CCUG 7422 / NBRC 12200 / NCIMB 9375 / NCTC 10341 / NRRL NRS-1264 / Gibson 46).